The sequence spans 406 residues: Lymphocyte transmembrane adapter 1 (406 aa).

Residues 1-25 (MYTTPAPPEITRRSSEPSTQQGTLG) are disordered. Topologically, residues 1–33 (MYTTPAPPEITRRSSEPSTQQGTLGSLEGEKGH) are extracellular. A helical; Signal-anchor for type III membrane protein transmembrane segment spans residues 34-54 (LLFPGFVVLVTIFLVVIVTCI). The Cytoplasmic portion of the chain corresponds to 55 to 406 (LWSRKKQKKR…LATETSGEEV (352 aa)). Positions 109 to 131 (ESLLSRASDSPEPEVPQASGSLQ) are disordered. A Phosphotyrosine modification is found at Y184. The tract at residues 219–258 (AEGGHAGCGKATDRTGVWAPGLQGSNSLSEGDDSSQSSND) is disordered. The span at 242 to 258 (GSNSLSEGDDSSQSSND) shows a compositional bias: low complexity. 3 positions are modified to phosphotyrosine: Y259, Y285, and Y352. Positions 358–406 (PELEGKDWKQGPGTWHPSDERTPSDQAGKFCEAVYPAGSLATETSGEEV) are disordered.

As to quaternary structure, when phosphorylated, interacts with GRB2, PIK3R1 and GRAP2. Post-translationally, phosphorylated on tyrosines upon TCR or BCR activation; which leads to the recruitment of GRB2, PIK3R1 and GRAP2.

The protein localises to the cell membrane. Negatively regulates TCR (T-cell antigen receptor)-mediated signaling in T-cells and BCR (B-cell antigen receptor)-mediated signaling in B-cells. The polypeptide is Lymphocyte transmembrane adapter 1 (Lax1) (Rattus norvegicus (Rat)).